We begin with the raw amino-acid sequence, 185 residues long: Ribosome-recycling factor (185 aa).

This sequence belongs to the RRF family.

Its subcellular location is the cytoplasm. Its function is as follows. Responsible for the release of ribosomes from messenger RNA at the termination of protein biosynthesis. May increase the efficiency of translation by recycling ribosomes from one round of translation to another. The chain is Ribosome-recycling factor from Helicobacter hepaticus (strain ATCC 51449 / 3B1).